Reading from the N-terminus, the 423-residue chain is Replication factor C large subunit (423 aa).

ATP is bound at residue 50-57 (GPAGCGKT).

Belongs to the activator 1 small subunits family. RfcL subfamily. As to quaternary structure, heteromultimer composed of small subunits (RfcS) and large subunits (RfcL).

In terms of biological role, part of the RFC clamp loader complex which loads the PCNA sliding clamp onto DNA. The protein is Replication factor C large subunit of Staphylothermus marinus (strain ATCC 43588 / DSM 3639 / JCM 9404 / F1).